The primary structure comprises 962 residues: Glycine dehydrogenase (decarboxylating) (962 aa).

Lysine 709 is subject to N6-(pyridoxal phosphate)lysine.

Belongs to the GcvP family. In terms of assembly, the glycine cleavage system is composed of four proteins: P, T, L and H. Requires pyridoxal 5'-phosphate as cofactor.

It carries out the reaction N(6)-[(R)-lipoyl]-L-lysyl-[glycine-cleavage complex H protein] + glycine + H(+) = N(6)-[(R)-S(8)-aminomethyldihydrolipoyl]-L-lysyl-[glycine-cleavage complex H protein] + CO2. In terms of biological role, the glycine cleavage system catalyzes the degradation of glycine. The P protein binds the alpha-amino group of glycine through its pyridoxal phosphate cofactor; CO(2) is released and the remaining methylamine moiety is then transferred to the lipoamide cofactor of the H protein. The sequence is that of Glycine dehydrogenase (decarboxylating) from Shewanella oneidensis (strain ATCC 700550 / JCM 31522 / CIP 106686 / LMG 19005 / NCIMB 14063 / MR-1).